A 76-amino-acid chain; its full sequence is RNA-binding protein KhpA (76 aa).

In terms of domain architecture, KH spans 29–76 (SLHIELSVHPDDMGKVIGKQGRTAKALRSVVYAAATKQKRRVRLDIID).

The protein belongs to the KhpA RNA-binding protein family. In terms of assembly, forms a complex with KhpB.

The protein resides in the cytoplasm. Its function is as follows. A probable RNA chaperone. Forms a complex with KhpB which binds to cellular RNA and controls its expression. Plays a role in peptidoglycan (PG) homeostasis and cell length regulation. This chain is RNA-binding protein KhpA, found in Halalkalibacterium halodurans (strain ATCC BAA-125 / DSM 18197 / FERM 7344 / JCM 9153 / C-125) (Bacillus halodurans).